A 273-amino-acid polypeptide reads, in one-letter code: tRNA (guanine-N(7)-)-methyltransferase (273 aa).

S-adenosyl-L-methionine-binding residues include Gly-86, Glu-109, Arg-111, Asn-142, Ala-143, and Leu-162. The active site involves Asp-165. An alphaC helix region spans residues 166–174 (PHFKKTKHK). S-adenosyl-L-methionine-binding residues include Thr-240 and Glu-242. Positions 240–248 (TEEGKKVQR) are alpha6 helix.

Belongs to the class I-like SAM-binding methyltransferase superfamily. TrmB family. In terms of assembly, catalytic component of the METTL1-WDR4 complex, composed of mettl1 and wdr4.

The protein localises to the nucleus. It catalyses the reaction guanosine(46) in tRNA + S-adenosyl-L-methionine = N(7)-methylguanosine(46) in tRNA + S-adenosyl-L-homocysteine. The enzyme catalyses a guanosine in mRNA + S-adenosyl-L-methionine = an N(7)-methylguanosine in mRNA + S-adenosyl-L-homocysteine. The catalysed reaction is a guanosine in miRNA + S-adenosyl-L-methionine = an N(7)-methylguanosine in miRNA + S-adenosyl-L-homocysteine. The protein operates within tRNA modification; N(7)-methylguanine-tRNA biosynthesis. Catalytic component of METTL1-WDR4 methyltransferase complex that mediates the formation of N(7)-methylguanine in a subset of RNA species, such as tRNAs, mRNAs and microRNAs (miRNAs). Catalyzes the formation of N(7)-methylguanine at position 46 (m7G46) in a large subset of tRNAs that contain the 5'-RAGGU-3' motif within the variable loop. M7G46 interacts with C13-G22 in the D-loop to stabilize tRNA tertiary structure and protect tRNAs from decay. Also acts as a methyltransferase for a subset of internal N(7)-methylguanine in mRNAs. Internal N(7)-methylguanine methylation of mRNAs in response to stress promotes their relocalization to stress granules, thereby suppressing their translation. Also methylates a specific subset of miRNAs. In Xenopus laevis (African clawed frog), this protein is tRNA (guanine-N(7)-)-methyltransferase (mettl1).